A 733-amino-acid polypeptide reads, in one-letter code: Phosphoribosylformylglycinamidine synthase subunit PurL (733 aa).

His-42 is a catalytic residue. The ATP site is built by Tyr-45 and Lys-84. A Mg(2+)-binding site is contributed by Glu-86. Residues 87–90 and Arg-109 contribute to the substrate site; that span reads SHNH. The active-site Proton acceptor is His-88. Mg(2+) is bound at residue Asp-110. Gln-233 contacts substrate. Asp-261 provides a ligand contact to Mg(2+). 305-307 provides a ligand contact to substrate; it reads ESQ. The ATP site is built by Asp-489 and Gly-526. Mg(2+) is bound at residue Asn-527. Position 529 (Ser-529) interacts with substrate.

It belongs to the FGAMS family. Monomer. Part of the FGAM synthase complex composed of 1 PurL, 1 PurQ and 2 PurS subunits.

It localises to the cytoplasm. It catalyses the reaction N(2)-formyl-N(1)-(5-phospho-beta-D-ribosyl)glycinamide + L-glutamine + ATP + H2O = 2-formamido-N(1)-(5-O-phospho-beta-D-ribosyl)acetamidine + L-glutamate + ADP + phosphate + H(+). It functions in the pathway purine metabolism; IMP biosynthesis via de novo pathway; 5-amino-1-(5-phospho-D-ribosyl)imidazole from N(2)-formyl-N(1)-(5-phospho-D-ribosyl)glycinamide: step 1/2. Functionally, part of the phosphoribosylformylglycinamidine synthase complex involved in the purines biosynthetic pathway. Catalyzes the ATP-dependent conversion of formylglycinamide ribonucleotide (FGAR) and glutamine to yield formylglycinamidine ribonucleotide (FGAM) and glutamate. The FGAM synthase complex is composed of three subunits. PurQ produces an ammonia molecule by converting glutamine to glutamate. PurL transfers the ammonia molecule to FGAR to form FGAM in an ATP-dependent manner. PurS interacts with PurQ and PurL and is thought to assist in the transfer of the ammonia molecule from PurQ to PurL. This chain is Phosphoribosylformylglycinamidine synthase subunit PurL, found in Moorella thermoacetica (strain ATCC 39073 / JCM 9320).